The chain runs to 232 residues: Putative N-acetylmannosamine-6-phosphate 2-epimerase (232 aa).

It belongs to the NanE family.

It carries out the reaction an N-acyl-D-glucosamine 6-phosphate = an N-acyl-D-mannosamine 6-phosphate. The protein operates within amino-sugar metabolism; N-acetylneuraminate degradation; D-fructose 6-phosphate from N-acetylneuraminate: step 3/5. Functionally, converts N-acetylmannosamine-6-phosphate (ManNAc-6-P) to N-acetylglucosamine-6-phosphate (GlcNAc-6-P). The protein is Putative N-acetylmannosamine-6-phosphate 2-epimerase of Borreliella burgdorferi (strain ZS7) (Borrelia burgdorferi).